Reading from the N-terminus, the 519-residue chain is uncharacterized protein (519 aa).

4 helical membrane-spanning segments follow: residues 141-161, 202-222, 385-405, and 433-453; these read GSSL…ANVF, LGET…WALA, FVVR…PFVG, and TVVP…AELV.

It is found in the cell membrane. This is an uncharacterized protein from Sinorhizobium fredii (strain NBRC 101917 / NGR234).